The chain runs to 195 residues: ATP-dependent Clp protease proteolytic subunit (195 aa).

Serine 99 acts as the Nucleophile in catalysis. Histidine 124 is a catalytic residue.

The protein belongs to the peptidase S14 family. In terms of assembly, fourteen ClpP subunits assemble into 2 heptameric rings which stack back to back to give a disk-like structure with a central cavity, resembling the structure of eukaryotic proteasomes.

The protein resides in the cytoplasm. The catalysed reaction is Hydrolysis of proteins to small peptides in the presence of ATP and magnesium. alpha-casein is the usual test substrate. In the absence of ATP, only oligopeptides shorter than five residues are hydrolyzed (such as succinyl-Leu-Tyr-|-NHMec, and Leu-Tyr-Leu-|-Tyr-Trp, in which cleavage of the -Tyr-|-Leu- and -Tyr-|-Trp bonds also occurs).. Functionally, cleaves peptides in various proteins in a process that requires ATP hydrolysis. Has a chymotrypsin-like activity. Plays a major role in the degradation of misfolded proteins. The sequence is that of ATP-dependent Clp protease proteolytic subunit from Coxiella burnetii (strain CbuG_Q212) (Coxiella burnetii (strain Q212)).